The chain runs to 601 residues: Amino-acid acetyltransferase, mitochondrial (601 aa).

One can recognise an N-acetyltransferase domain in the interval 401–558; that stretch reads FTMDNLIASK…KKKQNNKKKK (158 aa).

Belongs to the acetyltransferase family.

The protein localises to the mitochondrion. The catalysed reaction is L-glutamate + acetyl-CoA = N-acetyl-L-glutamate + CoA + H(+). The protein operates within amino-acid biosynthesis; L-arginine biosynthesis; N(2)-acetyl-L-ornithine from L-glutamate: step 1/4. N-acetylglutamate synthase involved in arginine biosynthesis. The protein is Amino-acid acetyltransferase, mitochondrial (ARG2) of Lodderomyces elongisporus (strain ATCC 11503 / CBS 2605 / JCM 1781 / NBRC 1676 / NRRL YB-4239) (Yeast).